A 695-amino-acid polypeptide reads, in one-letter code: Follicle-stimulating hormone receptor (695 aa).

The N-terminal stretch at 1-17 is a signal peptide; it reads MALFLVALLAFLSLGSG. 2 disulfide bridges follow: Cys-18/Cys-25 and Cys-23/Cys-32. The LRRNT domain occupies 18–46; sequence CHHRLCHCSNGVFLCQDSKVTEMPSDLPR. Over 18 to 366 the chain is Extracellular; it reads CHHRLCHCSN…EDIMGYDILR (349 aa). LRR repeat units lie at residues 48-70, 71-93, 96-118, 121-142, 143-167, 171-192, 194-216, 219-239, and 240-262; these read AVEL…SGFG, DLEK…VFSN, KLHE…AFQN, NLRY…HKIQ, SLQK…SFMG, ESMI…AFNG, QLDE…VFQG, GPVI…YGLE, and NLKK…EKFV. Asn-191 and Asn-199 each carry an N-linked (GlcNAc...) asparagine glycan. Intrachain disulfides connect Cys-275/Cys-346, Cys-276/Cys-292, Cys-276/Cys-356, and Cys-292/Cys-338. Asn-293 carries N-linked (GlcNAc...) asparagine glycosylation. Tyr-335 bears the Sulfotyrosine mark. The chain crosses the membrane as a helical span at residues 367 to 387; the sequence is VLIWFISILAITGNILVLVIL. At 388–398 the chain is on the cytoplasmic side; it reads ITSQYKLTVPR. Residues 399-421 traverse the membrane as a helical segment; it reads FLMCNLAFADLCIGIYLLLIASV. Over 422-443 the chain is Extracellular; that stretch reads DVHTKSQYHNYAIDWQTGAGCD. Cys-442 and Cys-517 form a disulfide bridge. The chain crosses the membrane as a helical span at residues 444–465; the sequence is AAGFFTVFASELSVYTLTAITL. Residues 466–485 are Cytoplasmic-facing; that stretch reads ERWHTITHAMQLECKVHVRH. A helical membrane pass occupies residues 486-508; sequence AASIMLVGWVFAFAVALFPIFGI. Over 509–528 the chain is Extracellular; sequence SSYMKVSICLPMDIDSPLSQ. A helical transmembrane segment spans residues 529-550; sequence LYVMSLLVLNVLAFVVICGCYT. At 551 to 573 the chain is on the cytoplasmic side; sequence HIYLTVRNPNITSSSSDTKIAKR. A helical transmembrane segment spans residues 574–597; it reads MAMLIFTDFLCMAPISFFAISASL. Residues 598–608 lie on the Extracellular side of the membrane; it reads KVPLITVSKSK. A helical transmembrane segment spans residues 609-630; sequence ILLVLFYPINSCANPFLYAIFT. Residues 631–695 are Cytoplasmic-facing; it reads RNFRRDFFIL…LIPLRHLAKN (65 aa).

Belongs to the G-protein coupled receptor 1 family. FSH/LSH/TSH subfamily. As to quaternary structure, homotrimer. Functions as a homotrimer binding the FSH hormone heterodimer composed of CGA and FSHB. Interacts with ARRB2. Interacts with APPL2; interaction is independent of follicle stimulating hormone stimulation. In terms of processing, N-glycosylated; indirectly required for FSH-binding, possibly via a conformational change that allows high affinity binding of hormone. Sulfated. Isoform FSH-R3 is expressed in ovary and testis, but not in kidney (at protein level).

It is found in the cell membrane. G protein-coupled receptor for follitropin, the follicle-stimulating hormone. The activity of isoform FSH-R1 is mediated by G proteins which activate adenylate cyclase. Isoform FSH-R2 and isoform FSH-R3 also bind FSH, but this does not result in activation of adenylate cyclase. Isoform FSH-R3 may be involved in calcium signaling. Through cAMP production activates the downstream PI3K-AKT and ERK1/ERK2 signaling pathways. This is Follicle-stimulating hormone receptor (FSHR) from Ovis aries (Sheep).